Reading from the N-terminus, the 262-residue chain is Merozoite surface protein 2 (262 aa).

The first 20 residues, 1 to 20 (MKVIKTLSIINFFIFVTFNI), serve as a signal peptide directing secretion. N-linked (GlcNAc...) asparagine glycans are attached at residues Asn22 and Asn36. The tract at residues 44–188 (AESKPPTGTG…EQTESPELQS (145 aa)) is polymorphic region. The disordered stretch occupies residues 44 to 223 (AESKPPTGTG…DSQKECTDGN (180 aa)). Residues 51–66 (GTGGSGSAGSGAGASA) show a composition bias toward gly residues. The span at 67 to 111 (GNGANPGADAERSPSTPATPATPATTTTTTTTNDAEASTSTSSEN) shows a compositional bias: low complexity. Basic and acidic residues predominate over residues 112-127 (PNHKNAETNPKGKGEV). Composition is skewed to polar residues over residues 129-155 (KPNQ…NVPP) and 162-190 (KSPT…QSAP). Asn139 carries N-linked (GlcNAc...) asparagine glycosylation. Asn211 carries an N-linked (GlcNAc...) asparagine glycan. A disulfide bond links Cys219 and Cys227. 2 N-linked (GlcNAc...) asparagine glycosylation sites follow: Asn235 and Asn236. The GPI-anchor amidated asparagine moiety is linked to residue Asn236. Positions 237–262 (SSNIASINKFVVLISATLVLSFAIFI) are cleaved as a propeptide — removed in mature form.

Its subcellular location is the cell membrane. May play a role in the merozoite attachment to the erythrocyte. The chain is Merozoite surface protein 2 from Plasmodium falciparum (isolate Camp / Malaysia).